A 411-amino-acid polypeptide reads, in one-letter code: S-adenosylmethionine synthase (411 aa).

Histidine 15 lines the ATP pocket. Residue aspartate 17 coordinates Mg(2+). Residue glutamate 43 participates in K(+) binding. The L-methionine site is built by glutamate 56 and glutamine 100. The interval glutamine 100–glutamate 110 is flexible loop. ATP contacts are provided by residues aspartate 171–lysine 173, lysine 248–phenylalanine 249, aspartate 257, arginine 263–lysine 264, alanine 280, and lysine 284. An L-methionine-binding site is contributed by aspartate 257. L-methionine is bound at residue lysine 288.

Belongs to the AdoMet synthase family. Homotetramer; dimer of dimers. Mg(2+) serves as cofactor. K(+) is required as a cofactor.

The protein resides in the cytoplasm. It carries out the reaction L-methionine + ATP + H2O = S-adenosyl-L-methionine + phosphate + diphosphate. Its pathway is amino-acid biosynthesis; S-adenosyl-L-methionine biosynthesis; S-adenosyl-L-methionine from L-methionine: step 1/1. In terms of biological role, catalyzes the formation of S-adenosylmethionine (AdoMet) from methionine and ATP. The overall synthetic reaction is composed of two sequential steps, AdoMet formation and the subsequent tripolyphosphate hydrolysis which occurs prior to release of AdoMet from the enzyme. The sequence is that of S-adenosylmethionine synthase from Synechococcus sp. (strain CC9605).